We begin with the raw amino-acid sequence, 432 residues long: Endosome-associated-trafficking regulator 1 (432 aa).

Residue Ser-18 is modified to Phosphoserine. A compositionally biased stretch (basic and acidic residues) spans 126–143 (DTTTSRIYPKEASRHPLG). Residues 126 to 145 (DTTTSRIYPKEASRHPLGLE) are disordered. A Phosphoserine modification is found at Ser-148. The interval 174-196 (LEEDEDDGWNITYLPSAVDQTHS) is required for interaction with PTPN13. Residues 226 to 250 (PPWTLSDTDSRISPASPAGSPNADF) form a disordered region. Ser-241 and Ser-245 each carry phosphoserine. 2 coiled-coil regions span residues 262-289 (LRTLQISYEALKDENSKLRRKLNEVQSF) and 315-370 (FHDL…LRSG).

It belongs to the ENTR1 family. As to quaternary structure, found in a complex with ENTR1, PTPN13 and GIT1. Interacts with PTPN13 (via the FERM domain). Interacts (via N-terminus) with GIT1 (via N- and C-terminus); this interaction is direct. Interacts with NOD2. Interacts (via N-terminus) with IFT88. Interacts with VPS35. Phosphorylated.

The protein localises to the cytoplasm. Its subcellular location is the early endosome. The protein resides in the endosome. It localises to the recycling endosome. It is found in the midbody. The protein localises to the cytoskeleton. Its subcellular location is the microtubule organizing center. The protein resides in the centrosome. It localises to the cilium basal body. May be involved in modulation of TNF response. May be involved in presentation of TNFRSF1A on the cell surface. Involved in the endosome-to-plasma membrane trafficking and recycling of SNX27-retromer-dependent cargo proteins, such as GLUT1. Involved in the regulation of cytokinesis; the function may involve PTPN13 and GIT1. Its function is as follows. Endosome-associated protein that plays a role in membrane receptor sorting, cytokinesis and ciliogenesis. Involved in the endosome-to-plasma membrane trafficking and recycling of SNX27-retromer-dependent cargo proteins, such as GLUT1. Involved in the regulation of cytokinesis; the function may involve PTPN13 and GIT1. Plays a role in the formation of cilia. Involved in cargo protein localization, such as PKD2, at primary cilia. Involved in the presentation of the tumor necrosis factor (TNF) receptor TNFRSF1A on the cell surface, and hence in the modulation of the TNF-induced apoptosis. This is Endosome-associated-trafficking regulator 1 from Mus musculus (Mouse).